A 62-amino-acid polypeptide reads, in one-letter code: MAKVCSVCGKGKVSGNQVSHSNKHNKRTWSANLRSVRAIIDGAPKRVKVCTRCLRSGKIERA.

It belongs to the bacterial ribosomal protein bL28 family.

This is Large ribosomal subunit protein bL28 from Clostridioides difficile (strain 630) (Peptoclostridium difficile).